A 530-amino-acid chain; its full sequence is Tyrosinase (530 aa).

An N-terminal signal peptide occupies residues 1 to 17 (MLLAALYCLLWSFRTSA). Over 19 to 473 (HFPRACASSK…IKPYLEQAQR (455 aa)) the chain is Lumenal, melanosome. A glycan (N-linked (GlcNAc...) asparagine) is linked at N86. 3 residues coordinate Cu cation: H180, H202, and H211. N-linked (GlcNAc...) asparagine glycans are attached at residues N230, N290, and N337. The Cu cation site is built by H363 and H367. A glycan (N-linked (GlcNAc...) asparagine) is linked at N371. H390 contacts Cu cation. The helical transmembrane segment at 474 to 494 (IWPWLIGAAVVGSVLTAVLGG) threads the bilayer. The Cytoplasmic segment spans residues 495-530 (LTSLLCRRKRNQLPEEKQPLLMEKEDYHNLMYQSHL).

This sequence belongs to the tyrosinase family. Forms an OPN3-dependent complex with DCT in response to blue light in melanocytes. Cu(2+) serves as cofactor. In terms of processing, glycosylated.

It is found in the melanosome membrane. The protein resides in the melanosome. The catalysed reaction is 2 L-dopa + O2 = 2 L-dopaquinone + 2 H2O. It catalyses the reaction L-tyrosine + O2 = L-dopaquinone + H2O. The enzyme catalyses 2 5,6-dihydroxyindole-2-carboxylate + O2 = 2 indole-5,6-quinone-2-carboxylate + 2 H2O. This is a copper-containing oxidase that functions in the formation of pigments such as melanins and other polyphenolic compounds. Catalyzes the initial and rate limiting step in the cascade of reactions leading to melanin production from tyrosine. In addition to hydroxylating tyrosine to DOPA (3,4-dihydroxyphenylalanine), also catalyzes the oxidation of DOPA to DOPA-quinone, and possibly the oxidation of DHI (5,6-dihydroxyindole) to indole-5,6 quinone. This Bos taurus (Bovine) protein is Tyrosinase (TYR).